Consider the following 180-residue polypeptide: Bifunctional protein PyrR (180 aa).

The short motif at 101-113 is the PRPP-binding element; sequence VILIDDVLFTGRT.

It belongs to the purine/pyrimidine phosphoribosyltransferase family. PyrR subfamily. In terms of assembly, homodimer and homohexamer; in equilibrium.

The catalysed reaction is UMP + diphosphate = 5-phospho-alpha-D-ribose 1-diphosphate + uracil. Functionally, regulates transcriptional attenuation of the pyrimidine nucleotide (pyr) operon by binding in a uridine-dependent manner to specific sites on pyr mRNA. This disrupts an antiterminator hairpin in the RNA and favors formation of a downstream transcription terminator, leading to a reduced expression of downstream genes. In terms of biological role, also displays a weak uracil phosphoribosyltransferase activity which is not physiologically significant. The polypeptide is Bifunctional protein PyrR (Oceanobacillus iheyensis (strain DSM 14371 / CIP 107618 / JCM 11309 / KCTC 3954 / HTE831)).